Reading from the N-terminus, the 778-residue chain is Aerobic respiration control sensor protein ArcB (778 aa).

Over 1 to 25 the chain is Cytoplasmic; the sequence is MKQIRLLAQYYVDLMMKLGLVRFSM. The helical transmembrane segment at 26–46 threads the bilayer; it reads LLALALVVLAIVVQMAVTMVL. The Periplasmic portion of the chain corresponds to 47 to 57; the sequence is HGQVESIDVIR. Residues 58–78 form a helical membrane-spanning segment; sequence SIFFGLLITPWAVYFLSVVVE. At 79–778 the chain is on the cytoplasmic side; it reads QLEESRQRLS…KAWVAKATKK (700 aa). The 71-residue stretch at 153–223 folds into the PAS domain; it reads QSSFLRSFLD…ETDEKVFRHN (71 aa). Residues 226–278 form the PAC domain; it reads LTYEQWLDYPDGRKACFEIRKVPYYDRVGKRHGLMGFGRDITERKRYQDALER. A Histidine kinase domain is found at 289–507; sequence TISHELRTPL…TFTLTIHAPS (219 aa). His-292 is modified (phosphohistidine; by autocatalysis). One can recognise a Response regulatory domain in the interval 527 to 643; sequence NVLLVEDIEL…ALTAMIKKFW (117 aa). Asp-576 carries the 4-aspartylphosphate modification. One can recognise an HPt domain in the interval 678-771; sequence GPKLITDGLA…RHDVEVLKAW (94 aa). At His-717 the chain carries Phosphohistidine.

Activation requires a sequential transfer of a phosphate group from a His in the primary transmitter domain, to an Asp in the receiver domain and to a His in the secondary transmitter domain.

The protein localises to the cell inner membrane. The enzyme catalyses ATP + protein L-histidine = ADP + protein N-phospho-L-histidine.. Its function is as follows. Member of the two-component regulatory system ArcB/ArcA. Sensor-regulator protein for anaerobic repression of the arc modulon. Activates ArcA via a four-step phosphorelay. ArcB can also dephosphorylate ArcA by a reverse phosphorelay involving His-717 and Asp-576. This Escherichia coli (strain K12) protein is Aerobic respiration control sensor protein ArcB (arcB).